We begin with the raw amino-acid sequence, 84 residues long: Limulin (84 aa).

Positions 6–84 constitute a Pentraxin (PTX) domain; it reads ITSKVKFPPS…DEQGDFLFNV (79 aa). Ca(2+) is bound by residues Asp-67 and Asn-68.

This sequence belongs to the pentraxin family. In terms of assembly, homopentamer. Pentraxin (or pentaxin) have a discoid arrangement of 5 non-covalently bound subunits. Ca(2+) is required as a cofactor. A disulfide bond links Cys-38 to a Cys in the C-terminal half of the chain of 163 residues.

In terms of biological role, lectin that binds sialic acid. Displays antiviral activity and therefore may contribute to defense against infections. This Limulus polyphemus (Atlantic horseshoe crab) protein is Limulin.